The sequence spans 294 residues: Probable ABC transporter permease protein YqgI (294 aa).

A run of 6 helical transmembrane segments spans residues Phe14–Ile34, Phe66–Phe86, Phe99–Leu121, Leu126–Met148, Ile190–Phe210, and Ala260–Ala280. The ABC transmembrane type-1 domain occupies Leu62 to Ala280.

This sequence belongs to the binding-protein-dependent transport system permease family. CysTW subfamily.

The protein resides in the cell membrane. Its function is as follows. Part of the binding-protein-dependent transport system YqgGHIJK. Probably responsible for the translocation of the substrate across the membrane. The sequence is that of Probable ABC transporter permease protein YqgI (yqgI) from Bacillus subtilis (strain 168).